The chain runs to 129 residues: Large-conductance mechanosensitive channel (129 aa).

Transmembrane regions (helical) follow at residues 8-28, 30-50, and 67-87; these read FIMR…AAFT, IVKS…AGAV, and GAVL…FLII.

This sequence belongs to the MscL family. In terms of assembly, homopentamer.

It localises to the cell membrane. Functionally, channel that opens in response to stretch forces in the membrane lipid bilayer. May participate in the regulation of osmotic pressure changes within the cell. In Oenococcus oeni (strain ATCC BAA-331 / PSU-1), this protein is Large-conductance mechanosensitive channel.